Consider the following 1158-residue polypeptide: Putative HERC2-like protein 3 (1158 aa).

The segment at 281–302 (PRKKRVPKKPESTDDEEKIGNE) is disordered. The span at 293–302 (TDDEEKIGNE) shows a compositional bias: acidic residues. The 74-residue stretch at 587 to 660 (SGPELAAMMK…NYDLKLAELP (74 aa)) folds into the MIB/HERC2 domain. The tract at residues 662–684 (PAQPSAEDSDTEDDSEAEQTERN) is disordered. A compositionally biased stretch (acidic residues) spans 668–679 (EDSDTEDDSEAE).

The polypeptide is Putative HERC2-like protein 3 (HERC2P3) (Homo sapiens (Human)).